Reading from the N-terminus, the 463-residue chain is L-seryl-tRNA(Sec) selenium transferase (463 aa).

At lysine 295 the chain carries N6-(pyridoxal phosphate)lysine.

This sequence belongs to the SelA family. As to quaternary structure, homodecamer; pentamer of dimers. Binds only one seryl-tRNA(Sec) per dimer. Pyridoxal 5'-phosphate is required as a cofactor.

The protein localises to the cytoplasm. It carries out the reaction L-seryl-tRNA(Sec) + selenophosphate + H(+) = L-selenocysteinyl-tRNA(Sec) + phosphate. Its pathway is aminoacyl-tRNA biosynthesis; selenocysteinyl-tRNA(Sec) biosynthesis; selenocysteinyl-tRNA(Sec) from L-seryl-tRNA(Sec) (bacterial route): step 1/1. Functionally, converts seryl-tRNA(Sec) to selenocysteinyl-tRNA(Sec) required for selenoprotein biosynthesis. The chain is L-seryl-tRNA(Sec) selenium transferase from Escherichia coli O17:K52:H18 (strain UMN026 / ExPEC).